The chain runs to 88 residues: Small ribosomal subunit protein uS17 (88 aa).

This sequence belongs to the universal ribosomal protein uS17 family. In terms of assembly, part of the 30S ribosomal subunit.

In terms of biological role, one of the primary rRNA binding proteins, it binds specifically to the 5'-end of 16S ribosomal RNA. This Stutzerimonas stutzeri (strain A1501) (Pseudomonas stutzeri) protein is Small ribosomal subunit protein uS17.